The sequence spans 267 residues: Putative B3 domain-containing protein LOC_Os07g12820 (267 aa).

Positions 4–99 (PTFSMVKIKT…RLNVIIFNKE (96 aa)) form a DNA-binding region, TF-B3.

It localises to the nucleus. The sequence is that of Putative B3 domain-containing protein LOC_Os07g12820 from Oryza sativa subsp. japonica (Rice).